Here is a 243-residue protein sequence, read N- to C-terminus: CTD nuclear envelope phosphatase 1 homolog (243 aa).

Residues 11–27 form a helical membrane-spanning segment; sequence ALLLLLSKVWTCICFMF. One can recognise an FCP1 homology domain in the interval 56–223; it reads SLVQRKTLVL…LSLLPMLDAL (168 aa).

The protein belongs to the dullard family.

Its subcellular location is the membrane. It catalyses the reaction O-phospho-L-seryl-[protein] + H2O = L-seryl-[protein] + phosphate. The catalysed reaction is O-phospho-L-threonyl-[protein] + H2O = L-threonyl-[protein] + phosphate. Functionally, serine/threonine protein phosphatase that may dephosphorylate and activate lipin-like phosphatases. Lipins are phosphatidate phosphatases that catalyze the conversion of phosphatidic acid to diacylglycerol and control the metabolism of fatty acids at different levels. May indirectly modulate the lipid composition of nuclear and/or endoplasmic reticulum membranes and be required for proper nuclear membrane morphology and/or dynamics. May also indirectly regulate the production of lipid droplets and triacylglycerol. The polypeptide is CTD nuclear envelope phosphatase 1 homolog (l(1)G0269) (Drosophila pseudoobscura pseudoobscura (Fruit fly)).